The chain runs to 313 residues: Porphobilinogen deaminase (313 aa).

Cys-242 carries the S-(dipyrrolylmethanemethyl)cysteine modification.

The protein belongs to the HMBS family. As to quaternary structure, monomer. It depends on dipyrromethane as a cofactor.

The catalysed reaction is 4 porphobilinogen + H2O = hydroxymethylbilane + 4 NH4(+). It participates in porphyrin-containing compound metabolism; protoporphyrin-IX biosynthesis; coproporphyrinogen-III from 5-aminolevulinate: step 2/4. Functionally, tetrapolymerization of the monopyrrole PBG into the hydroxymethylbilane pre-uroporphyrinogen in several discrete steps. The protein is Porphobilinogen deaminase of Yersinia pseudotuberculosis serotype O:1b (strain IP 31758).